Reading from the N-terminus, the 901-residue chain is MLIPSKLSRPVRLDHTVVRERLLAKLSGANNFRLALITSPAGYGKTTLISQWAAGKNDIGWYSLDEGDNQQERFASYLIAAVQQATNGHCAICETMAQKRQYASLTSLFAQLFIELAEWHSPLYLVIDDYHLITNPVIHESMRFFIRHQPENLTLVVLSRNLPQLGIANLRVRDQLLEIGSQQLAFTHQEAKQFFDCRLSSPIEAAESSRICDDVSGWATALQLIALSARQNTHSAHKSARRLAGINASHLSDYLVDEVLDNVDLATRHFLLKSAILRSMNDALITRVTGEENGQMRLEEIERQGLFLQRMDDTGEWFCYHPLFGNFLRQRCQWELAAELPEIHRAAAESWMAQGFPSEAIHHALAAGDALMLRDILLNHAWSLFNHSELSLLEESLKALPWDSLLENPQLVLLQAWLMQSQHRYGEVNTLLARAEHEIKDIREGTMHAEFNALRAQVAINDGSPDEAERLAKLALEELPPGWFYSRIVATSVLGEVLHCKGELTRSLALMQQTEQMARQHDVWHYALWSLIQQSEILFAQGFLQTAWETQEKAFQLINEQHLEQLPMHEFLVRIRAQLLWAWARLDEAEASARSGIEVLSSYQPQQQLQCLAMLIQCSLARGDLDNARSQLNRLENLLGNGKYHSDWISNANKVRVIYWQMTGDKAAAANWLRHTAKPEFANNHFLQGQWRNIARAQILLGEFESAEIVLEELNENARSLRLMSDLNRNLLLLNQLYWQAGRKSDAQRVLLDALKLANRTGFISHFVIEGEAMAQQLRQLIQLNTLPELEQHRAQRILREINQHHRHKFAHFDENFVERLLNHPEVPELIRTSPLTQREWQVLGLIYSGYSNEQIAGELEVAATTIKTHIRNLYQKLGVAHRQAAVQHAQKLLKMMGYGV.

S39–T46 is a binding site for ATP. The HTH luxR-type domain occupies E829 to L894. Positions N853–R872 form a DNA-binding region, H-T-H motif.

The protein belongs to the MalT family. Monomer in solution. Oligomerizes to an active state in the presence of the positive effectors ATP and maltotriose.

With respect to regulation, activated by ATP and maltotriose, which are both required for DNA binding. In terms of biological role, positively regulates the transcription of the maltose regulon whose gene products are responsible for uptake and catabolism of malto-oligosaccharides. Specifically binds to the promoter region of its target genes, recognizing a short DNA motif called the MalT box. This chain is HTH-type transcriptional regulator MalT, found in Escherichia coli O6:K15:H31 (strain 536 / UPEC).